We begin with the raw amino-acid sequence, 957 residues long: Receptor-like protein 53 (957 aa).

The first 30 residues, 1–30 (MEGFWNSKSIIRITLSFIFLFICHFLDVLA), serve as a signal peptide directing secretion. Residues 31–910 (APTRNLCRPE…EEEDEDLISW (880 aa)) are Extracellular-facing. N-linked (GlcNAc...) asparagine glycans are attached at residues N78, N114, N143, N167, and N191. 12 LRR repeats span residues 120–143 (LHFLTTLDLSFNDFKGQITSSIEN), 144–170 (LSHLTYLDLSSNHFSGQILNSIGNLSR), 172–192 (TYLNLFDNQFSGQAPSSICNL), 193–216 (SHLTFLDLSYNRFFGQFPSSIGGL), 217–240 (SHLTTLSLFSNKFSGQIPSSIGNL), 241–266 (SNLTTLDLSNNNFSGQIPSFIGNLSQ), 268–287 (TFLGLFSNNFVGEIPSSFGN), 288–312 (LNQLTRLYVDDNKLSGNFPNVLLNL), 313–336 (TGLSLLSLSNNKFTGTLPPNITSL), 338–360 (NLMDFDASDNAFTGTFPSFLFTI), 361–384 (PSLTYIRLNGNQLKGTLEFGNISS), and 386–409 (SNLYELDIGNNNFIGPIPSSISKL). N-linked (GlcNAc...) asparagine glycosylation is found at N239, N242, N252, and N263. N311 and N332 each carry an N-linked (GlcNAc...) asparagine glycan. N-linked (GlcNAc...) asparagine glycosylation occurs at N381. Residues 412 to 433 (LFRLDISHLNTQGPVDFSIFSH) form an LRR 13; degenerate repeat. LRR repeat units follow at residues 434–458 (LKSLLDLNISHLNTTTRIDLNYFLS), 460–483 (FKRLLLLDLSGNHVSATNKSSVSD), 486–509 (SQLIQSLYLSGCGITEFPEFVRTQ), 510–533 (HELGFLDISNNKIKGQVPDWLWRL), 535–556 (ILYYVNLSNNTLIGFQRPSKPE), 558–580 (SLLYLLGSNNNFIGKIPSFICGL), 581–604 (RSLNTLDLSDNNFNGSIPRCMGHL), 605–629 (KSTLSVLNLRQNHLSGGLPKQIFEI), 631–651 (RSLDVGHNQLVGKLPRSLSFF), 652–674 (STLEVLNVESNRINDTFPFWLSS), 675–697 (LPKLQVLVLRSNAFHGPIHEATF), 698–721 (PELRIIDISHNRFNGTLPTEYFVK), 765–789 (LTIYTAVDFSGNRFEGEIPKSIGLL), 790–813 (KELLVLSLSNNAFSGHMPSSMGNL), 814–837 (TALESLDVSKNKLTGEIPQELGDL), and 839–862 (FLAYMNFSHNQLAGLVPGGQQFLT). N-linked (GlcNAc...) asparagine glycans are attached at residues N441, N446, and N477. Residues N540 and N543 are each glycosylated (N-linked (GlcNAc...) asparagine). N-linked (GlcNAc...) asparagine glycosylation is present at N594. N665 carries an N-linked (GlcNAc...) asparagine glycan. N711 carries N-linked (GlcNAc...) asparagine glycosylation. An N-linked (GlcNAc...) asparagine glycan is attached at N812. N-linked (GlcNAc...) asparagine glycosylation is found at N844 and N864. The helical transmembrane segment at 911 to 931 (IAAAIGFGPGIAFGLMFGYIL) threads the bilayer. Residues 932–957 (VSYKPEWFMNPFDRNNRRQKRHKTTH) are Cytoplasmic-facing.

This sequence belongs to the RLP family.

The protein localises to the cell membrane. The polypeptide is Receptor-like protein 53 (Arabidopsis thaliana (Mouse-ear cress)).